We begin with the raw amino-acid sequence, 622 residues long: MRVLCVAEKNSIAKSVASILGGGHVRRRDTRSKYVKNYDFSFNFGGNVGSSDVTMTSVSGHLTEASFPSEYSSWSSVPQDVLFDAQIITSVSKNAEVLADNIKKEARNAQYLYIWTDCDREGEHIGVEISNVARASNPSIQVIRADFNNLERSHIISAAKRPRDVSKNAADAVDARIELDFRLGAIFTRLQTIQLQKSFDILQNKIISYGPCQFPTLGFVVDRWQRVEDFVPETYWHLRFVDKRQGKTIQFNWERAKVFDRLTTMIILENCLECKTAKVVNITQKPKTKYKPLPLSTVELTKLGPKHLRISAKKTLELAENLYTNGFVSYPRTETDQFDSSMNLHAIIQKLTGAQEWDSYAEGLLAGDYRPPRKGKHNDRAHPPIHPVQMVHRSALPSQDHWKVYELITRRFLACCSDNAKGAETLVQVKMEEELFSKKGLLVTEKNYLEVYPYEKWESSDQLPEYRLHEEFQPHILDMMDSSTSSPSYITEPELIALMDANGIGTDATMAEHIEKVQEREYVIKRKKRGQGVTEFVPSSLGVALAKGYDEIGLEWSLTKPFLRKEMEVQLKNIENGQLNRNVLVHMILTQFRDVFHLTKQRFDCLKNSCRVYLMSHNEPQT.

A Toprim domain is found at 2–148 (RVLCVAEKNS…SIQVIRADFN (147 aa)). Positions 166–596 (SKNAADAVDA…MILTQFRDVF (431 aa)) constitute a Topo IA-type catalytic domain. Tyr-330 serves as the catalytic O-(5'-phospho-DNA)-tyrosine intermediate.

The protein belongs to the type IA topoisomerase family. Interacts with hus2.

The catalysed reaction is ATP-independent breakage of single-stranded DNA, followed by passage and rejoining.. Functionally, releases the supercoiling and torsional tension of DNA introduced during the DNA replication and transcription by transiently cleaving and rejoining one strand of the DNA duplex. Introduces a single-strand break via transesterification at a target site in duplex DNA. The scissile phosphodiester is attacked by the catalytic tyrosine of the enzyme, resulting in the formation of a DNA-(5'-phosphotyrosyl)-enzyme intermediate and the expulsion of a 3'-OH DNA strand. The free DNA strand than undergoes passage around the unbroken strand thus removing DNA supercoils. Finally, in the religation step, the DNA 3'-OH attacks the covalent intermediate to expel the active-site tyrosine and restore the DNA phosphodiester backbone. This is DNA topoisomerase 3 (top3) from Schizosaccharomyces pombe (strain 972 / ATCC 24843) (Fission yeast).